Reading from the N-terminus, the 228-residue chain is UPF0758 protein STER_1430 (228 aa).

The MPN domain occupies 103–225 (QIMSSQQVAR…YYSFREERED (123 aa)). Zn(2+)-binding residues include His174, His176, and Asp187. The short motif at 174–187 (HNHPSGEAYPSRND) is the JAMM motif element.

This sequence belongs to the UPF0758 family.

The polypeptide is UPF0758 protein STER_1430 (Streptococcus thermophilus (strain ATCC BAA-491 / LMD-9)).